The primary structure comprises 400 residues: N(alpha)-acyl-glutamine aminoacylase (400 aa).

It belongs to the peptidase M20 family. Requires Zn(2+) as cofactor.

The catalysed reaction is an N(2)-acyl-L-glutamine + H2O = a carboxylate + L-glutamine. The enzyme catalyses N(2)-[(2E)-3-methylhex-2-enoyl]-L-glutaminate + H2O = (2E)-3-methylhex-2-enoate + L-glutamine. It carries out the reaction N(2)-(3-hydroxy-3-methylhexanoyl)-L-glutaminate + H2O = 3-hydroxy-3-methylhexanoate + L-glutamine. Its activity is regulated as follows. Partial loss of activity with the combination Mn(2+) and chelating agents. Activity is lost in presence of 0.5 mM dithiothreitol. In terms of biological role, hydrolyzes odorless N-alpha-acyl-L-glutamine conjugates of short- and medium-chain fatty acids, releasing human axillary malodor compounds. The enzyme is highly specific for the glutamine residue but has a low specificity for the acyl part of the substrate. The two most common products are 3-methyl-2-hexenoic acid (3M2H) and 3-hydroxy-3-methyl-hexanoic acid (HMHA), which are produced from the odorless precursors N-alpha-3-methyl-2-hexenoyl-L-glutamine (3M2H-Gln) and N-alpha-3-hydroxy-3-methylhexanoyl-L-glutamine (HMHA-Gln). In addition, over 28 different carboxylic acids contributing to human body odor are released by this enzyme from odorless axilla secretions, including several aliphatic 3-hydroxy acids with 4-Me branches, 3,4-unsaturated, 4-Et-branched aliphatic acids, and a variety of degradation products of amino acids. This is N(alpha)-acyl-glutamine aminoacylase from Corynebacterium striatum.